Reading from the N-terminus, the 353-residue chain is Terpene synthase 1 (353 aa).

Residues 81–86 (DDAIDA) carry the DDxx(x)D/E motif motif. An NDxxSxxxD/E motif motif is present at residues 222–230 (NDLVSYEKE).

Belongs to the terpene synthase family.

It carries out the reaction (2E,6E)-farnesyl diphosphate = (2S,3R,6S,9S)-(-)-protoillud-7-ene + diphosphate. Its function is as follows. Terpene synthase that converts its substrate farnesyl diphosphate (FPP) into the sesquiterpene protoillud-7-ene. This is Terpene synthase 1 from Tieghemostelium lacteum (Slime mold).